Here is a 706-residue protein sequence, read N- to C-terminus: Maternal embryonic leucine zipper kinase (706 aa).

The Protein kinase domain maps to 11–265 (YAVHDELGSG…VKKLLEHDWL (255 aa)). ATP is bound by residues 17-25 (LGSGGFGKV) and Lys40. Asp132 functions as the Proton acceptor in the catalytic mechanism. Disordered regions lie at residues 366-386 (LDKS…SSSD), 433-493 (FTGR…SRGP), and 506-555 (SVYT…IGSA). Composition is skewed to polar residues over residues 447–461 (SVRS…SAAT) and 506–515 (SVYTTPNTRP). Residues 656–705 (QETVHGWMTVELEIVRLQMFDKVGIRRKRLKGDAFMYKKVCEKILQMAKI) enclose the KA1 domain.

This sequence belongs to the protein kinase superfamily. CAMK Ser/Thr protein kinase family. SNF1 subfamily. Post-translationally, may be phosphorylated at Thr-169 by par-4 and/or autophosphorylated which likely results in its activation. Phosphorylation is not required for co-localization with the centrosome.

The protein resides in the cytoplasm. Its subcellular location is the cytoskeleton. It localises to the microtubule organizing center. It is found in the centrosome. The enzyme catalyses L-seryl-[protein] + ATP = O-phospho-L-seryl-[protein] + ADP + H(+). It catalyses the reaction L-threonyl-[protein] + ATP = O-phospho-L-threonyl-[protein] + ADP + H(+). Serine/threonine-protein kinase involved in cell autonomous neuroblast asymmetric divisions that generate one precursor cell and one apoptotic cell by controlling spindle positioning, myosin distribution and the segregation of cell fate determinants. Plays a role in neural fate specification in several dopaminergic linages, acting in concert with ham-1. Involved in phosphorylation of multiple proteins associated with key developmental processes, including the cell cycle, apoptosis, endocytosis, and asymmetric cell division. Promotes cell shedding during embryogenesis, probably through the endocytosis-mediated removal of cell adhesion molecules such as hmp-1 from the cell surface. May act downstream of par-4/strd-1/mop-25 to regulate cell shedding. The chain is Maternal embryonic leucine zipper kinase from Caenorhabditis elegans.